Consider the following 319-residue polypeptide: Cytochrome c biogenesis protein CcsA (319 aa).

The next 7 helical transmembrane spans lie at 9-29 (ILTH…LITL), 44-64 (GVIG…AYSG), 71-91 (LYES…FPYF), 143-163 (MVLG…LLVI), 225-245 (IISL…VWAN), 259-273 (TWAF…IYLH), and 286-306 (AIVA…VNLL).

This sequence belongs to the CcmF/CycK/Ccl1/NrfE/CcsA family. May interact with Ccs1.

Its subcellular location is the plastid. The protein resides in the chloroplast thylakoid membrane. In terms of biological role, required during biogenesis of c-type cytochromes (cytochrome c6 and cytochrome f) at the step of heme attachment. This chain is Cytochrome c biogenesis protein CcsA, found in Oenothera biennis (German evening primrose).